The sequence spans 374 residues: Putative G-protein coupled receptor-like protein B0244.6 (374 aa).

Residues 1–54 (MTQNHYTTSIFANCSKHYEFEILLETCTNSTNPCHAVSQIQSAITIAYVDYYTS) lie on the Extracellular side of the membrane. The chain crosses the membrane as a helical span at residues 55–75 (VALFSIAALLDIYCLIITIPL). Topologically, residues 76–86 (YRRMKDDSKKK) are cytoplasmic. The helical transmembrane segment at 87–107 (YVFLITRCISGLLLVVAWLLI) threads the bilayer. Over 108 to 137 (QCIYLRFIAPSQDNLPYYVLALALNIGSTY) the chain is Extracellular. The chain crosses the membrane as a helical span at residues 138 to 158 (VLLGSYVGMAGILYLGVLNPI). At 159-169 (AFNQHLTLRIV) the chain is on the cytoplasmic side. A helical membrane pass occupies residues 170–190 (YIAVCIIFVISIFISIPLAIF). Residues 191 to 216 (QALMTVPTSSMSCTDTACAPLITLIN) are Extracellular-facing. A helical membrane pass occupies residues 217–237 (FVLVFGSLITTTLTLTFVLIS). At 238–262 (LCRHRKEFKKLDTTSNTSLNSAVRL) the chain is on the cytoplasmic side. A helical membrane pass occupies residues 263-283 (LKFTLFAVLLLVAAEVIPFVI). Topologically, residues 284-304 (SETKKKHSVVTGCYYFYHSGK) are extracellular. A helical transmembrane segment spans residues 305-325 (VIQYAVFALTESSIWSIALII). At 326–374 (DPLINIIFDRTVSKKATDQVKWMRKSCVGLVRKVTKRSNPENFTETSEI) the chain is on the cytoplasmic side.

The protein belongs to the G-protein coupled receptor 1 family. B0244 subfamily.

Its subcellular location is the cell membrane. This Caenorhabditis elegans protein is Putative G-protein coupled receptor-like protein B0244.6.